The chain runs to 444 residues: Putative cytochrome P450 120 (444 aa).

Residue Cys391 coordinates heme.

The protein belongs to the cytochrome P450 family. Heme serves as cofactor.

This Synechocystis sp. (strain ATCC 27184 / PCC 6803 / Kazusa) protein is Putative cytochrome P450 120 (cyp120).